Here is a 497-residue protein sequence, read N- to C-terminus: MNLRELLTAAAITPGFEHPALNQEVKSLRMNSWECEPGSLFIGMPGTRVEGGNFWPSALAAGAIAAVVSPQAKPREGEACVIVVPDIERACGRLAAAFYNYPSQHLSLLGVTGTNGKTTTTHLVEHLLNRVGYPTALLGTLYSRWPGHCEVASHTTPFAVTLQEQLAAAVDAGCRFGVMEVSSHALAQDRVWGCQFEVAAFTNLTQDHLDYHRDLEDYFAAKAKLFTADYLKGRAILNGDDPFGQRLAQQLPRDRYWTYGLSKDADFRAENLNYRSNGVTGAVHTPLGSGTLDSPLVGQFNVANVLAAIAMGAAVGLPLEAMLNALRDFPGVPGRMEQVRLDPEQDITVVVDYAHTPDSLENLLRAARPFIPGKLICVFGCGGDRDRSKRPQMGAIAARLADQVVVTSDNPRTENPQRILDDILAGIPPETAMIVEGDRRQAILQAILTAAPGDGVIIAGKGHEDYQILGTEKVHFDDREEARNALKERLKQPLQRG.

Serine 32 is a binding site for UDP-N-acetyl-alpha-D-muramoyl-L-alanyl-D-glutamate. 113-119 provides a ligand contact to ATP; sequence GTNGKTT. UDP-N-acetyl-alpha-D-muramoyl-L-alanyl-D-glutamate is bound by residues 155-156, serine 182, glutamine 188, and arginine 190; that span reads TT. Lysine 222 carries the N6-carboxylysine modification. Residues arginine 385, 409 to 412, glycine 460, and glutamate 464 contribute to the meso-2,6-diaminopimelate site; that span reads DNPR. The Meso-diaminopimelate recognition motif signature appears at 409–412; sequence DNPR.

This sequence belongs to the MurCDEF family. MurE subfamily. Mg(2+) serves as cofactor. Carboxylation is probably crucial for Mg(2+) binding and, consequently, for the gamma-phosphate positioning of ATP.

Its subcellular location is the cytoplasm. The catalysed reaction is UDP-N-acetyl-alpha-D-muramoyl-L-alanyl-D-glutamate + meso-2,6-diaminopimelate + ATP = UDP-N-acetyl-alpha-D-muramoyl-L-alanyl-gamma-D-glutamyl-meso-2,6-diaminopimelate + ADP + phosphate + H(+). Its pathway is cell wall biogenesis; peptidoglycan biosynthesis. In terms of biological role, catalyzes the addition of meso-diaminopimelic acid to the nucleotide precursor UDP-N-acetylmuramoyl-L-alanyl-D-glutamate (UMAG) in the biosynthesis of bacterial cell-wall peptidoglycan. The chain is UDP-N-acetylmuramoyl-L-alanyl-D-glutamate--2,6-diaminopimelate ligase from Thermosynechococcus vestitus (strain NIES-2133 / IAM M-273 / BP-1).